The primary structure comprises 391 residues: 3-ketoacyl-CoA thiolase (391 aa).

Residue cysteine 95 is the Acyl-thioester intermediate of the active site. Catalysis depends on proton acceptor residues histidine 347 and cysteine 377.

The protein belongs to the thiolase-like superfamily. Thiolase family. As to quaternary structure, heterotetramer of two alpha chains (FadB) and two beta chains (FadA).

The protein resides in the cytoplasm. The enzyme catalyses an acyl-CoA + acetyl-CoA = a 3-oxoacyl-CoA + CoA. The protein operates within lipid metabolism; fatty acid beta-oxidation. Its function is as follows. Catalyzes the final step of fatty acid oxidation in which acetyl-CoA is released and the CoA ester of a fatty acid two carbons shorter is formed. The sequence is that of 3-ketoacyl-CoA thiolase from Pseudomonas putida (strain ATCC 700007 / DSM 6899 / JCM 31910 / BCRC 17059 / LMG 24140 / F1).